The primary structure comprises 314 residues: Methionyl-tRNA formyltransferase (314 aa).

113–116 (SLLP) contacts (6S)-5,6,7,8-tetrahydrofolate.

The protein belongs to the Fmt family.

It catalyses the reaction L-methionyl-tRNA(fMet) + (6R)-10-formyltetrahydrofolate = N-formyl-L-methionyl-tRNA(fMet) + (6S)-5,6,7,8-tetrahydrofolate + H(+). Attaches a formyl group to the free amino group of methionyl-tRNA(fMet). The formyl group appears to play a dual role in the initiator identity of N-formylmethionyl-tRNA by promoting its recognition by IF2 and preventing the misappropriation of this tRNA by the elongation apparatus. The chain is Methionyl-tRNA formyltransferase from Pseudomonas savastanoi pv. phaseolicola (strain 1448A / Race 6) (Pseudomonas syringae pv. phaseolicola (strain 1448A / Race 6)).